The following is an 800-amino-acid chain: Phenylalanine--tRNA ligase beta subunit (800 aa).

The tRNA-binding domain occupies 39 to 154 (TKDIKNLVVG…ESQVPGTDAL (116 aa)). The B5 domain occupies 408–483 (AFITPIDITA…RIYGYDDIPS (76 aa)). The Mg(2+) site is built by aspartate 461, aspartate 467, glutamate 470, and glutamate 471. The region spanning 708–800 (PRFPGMSRDI…ALIEQGAVIR (93 aa)) is the FDX-ACB domain.

The protein belongs to the phenylalanyl-tRNA synthetase beta subunit family. Type 1 subfamily. Tetramer of two alpha and two beta subunits. Requires Mg(2+) as cofactor.

It is found in the cytoplasm. It carries out the reaction tRNA(Phe) + L-phenylalanine + ATP = L-phenylalanyl-tRNA(Phe) + AMP + diphosphate + H(+). This is Phenylalanine--tRNA ligase beta subunit from Staphylococcus aureus.